We begin with the raw amino-acid sequence, 243 residues long: CRISPR-associated endoribonuclease Cas6 (243 aa).

It belongs to the CRISPR-associated endoribonuclease Cas6 family. As to quaternary structure, part of the Csm effector complex that includes at least Cas10(1), Csm2(3), Csm3(5), Csm4(1); the presence of Csm5 and Cas6 may depend on the processing state of precursor crRNA. Csm with a precursor crRNA does not include Csm5, while Cas6, the enzyme probably involved in pre-crRNA processing, is found associated with a subset of the Csm complex that is probably in the process of pre-crRNA maturation. The Csm complex is elongated and slightly twisted with a maximal length of 215 Angstroms and a diameter of 75-80 Angstroms. It has been modeled to have a central protein filamant of Csm3 subunits along which the dsRNA helix of paired crRNA and target RNA binds. The filament is capped at one end by Cas10 and Csm4 and at the other end by Csm5; ssDNA is thought to bind to the N-terminal HD domain of Cas10.

In terms of biological role, CRISPR (clustered regularly interspaced short palindromic repeat) is an adaptive immune system that provides protection against mobile genetic elements (viruses, transposable elements and conjugative plasmids). CRISPR clusters contain spacers, sequences complementary to antecedent mobile elements, and target invading nucleic acids. CRISPR clusters are transcribed and processed into CRISPR RNA (crRNA). The type III-A Csm effector complex binds crRNA and acts as a crRNA-guided RNase, DNase and cyclic oligoadenylate synthase; binding of target RNA cognate to the crRNA is required for all activities. In a heterologous host this Csm effector complex restricts ssRNA phage MS2, suggesting it may target RNA viruses in vivo. Csm functions as a non-specific ssDNase. Base-pairing between crRNA and target RNA to form a ternary Csm complex activates a ssDNase activity; target RNA cleavage suppresses the ssDNase, a temporal control that prevents uncontrolled DNA degradation. Viral RNA transcripts probably tether the Csm complex to the viral genome, recruiting Cas10 ssDNA activity which is able to degrade DNA in the transcription bubble, spatially controlling the DNase activity. Functionally, this protein processes pre-crRNA into individual crRNA units. In Streptococcus thermophilus, this protein is CRISPR-associated endoribonuclease Cas6.